The primary structure comprises 689 residues: Beta-adrenergic receptor kinase 1 (689 aa).

The segment at 1–190 (MADLEAVLAD…ELNIHLTMND (190 aa)) is N-terminal. The RGS domain occupies 54-175 (TFEKIFSQKL…IESEKFTRFC (122 aa)). The Protein kinase domain occupies 191-453 (FSVHRIIGRG…AQEVKEDPFF (263 aa)). Residues 197–205 (IGRGGFGEV) and Lys220 contribute to the ATP site. Asp317 functions as the Proton acceptor in the catalytic mechanism. One can recognise an AGC-kinase C-terminal domain in the interval 454-521 (KAVDWQMVLL…TISERWQQEV (68 aa)). Residues 558–652 (DCIMHGYMSK…WKKELRDVYR (95 aa)) enclose the PH domain. A disordered region spans residues 665 to 689 (KNKPRSPVVELSKMPLTQRGSANGL). Ser670 bears the Phosphoserine mark.

This sequence belongs to the protein kinase superfamily. AGC Ser/Thr protein kinase family. GPRK subfamily. Interacts with the heterodimer formed by GNB1 and GNG2. Interacts with GIT1. Interacts with, and phosphorylates chemokine-stimulated CCR5. Interacts with ARRB1. Interacts with LPAR1 and LPAR2. Interacts with RALA in response to LPAR1 activation. ADRBK1 and RALA mutually inhibit each other's binding to LPAR1. Interacts with ADRB2.

Its subcellular location is the cytoplasm. It localises to the cell membrane. It is found in the postsynapse. The protein resides in the presynapse. It carries out the reaction [beta-adrenergic receptor] + ATP = [beta-adrenergic receptor]-phosphate + ADP + H(+). With respect to regulation, in contrast to other AGC family kinases, the catalytic activity is solely regulated by the binding of substrates and ligands, not by phosphorylation of the kinase domain. In terms of biological role, specifically phosphorylates the agonist-occupied form of the beta-adrenergic and closely related receptors, probably inducing a desensitization of them. Does not act on HTR1B/5-hydroxytryptamine 1B receptor. Key regulator of LPAR1 signaling. Competes with RALA for binding to LPAR1 thus affecting the signaling properties of the receptor. Desensitizes LPAR1 and LPAR2 in a phosphorylation-independent manner. Inhibits relaxation of airway smooth muscle in response to blue light. This chain is Beta-adrenergic receptor kinase 1, found in Didelphis virginiana (North American opossum).